A 388-amino-acid chain; its full sequence is Succinate--CoA ligase [ADP-forming] subunit beta (388 aa).

An ATP-grasp domain is found at 9–244 (KQLFAEYGLP…PSQEDSREAH (236 aa)). Residues Lys46, 53 to 55 (GRG), Glu99, Thr102, and Glu107 contribute to the ATP site. Residues Asn199 and Asp213 each coordinate Mg(2+). Residues Asn264 and 321-323 (GIV) contribute to the substrate site.

Belongs to the succinate/malate CoA ligase beta subunit family. As to quaternary structure, heterotetramer of two alpha and two beta subunits. The cofactor is Mg(2+).

It carries out the reaction succinate + ATP + CoA = succinyl-CoA + ADP + phosphate. The catalysed reaction is GTP + succinate + CoA = succinyl-CoA + GDP + phosphate. It functions in the pathway carbohydrate metabolism; tricarboxylic acid cycle; succinate from succinyl-CoA (ligase route): step 1/1. Its function is as follows. Succinyl-CoA synthetase functions in the citric acid cycle (TCA), coupling the hydrolysis of succinyl-CoA to the synthesis of either ATP or GTP and thus represents the only step of substrate-level phosphorylation in the TCA. The beta subunit provides nucleotide specificity of the enzyme and binds the substrate succinate, while the binding sites for coenzyme A and phosphate are found in the alpha subunit. The polypeptide is Succinate--CoA ligase [ADP-forming] subunit beta (Pseudoalteromonas translucida (strain TAC 125)).